The chain runs to 204 residues: Histidine biosynthesis bifunctional protein HisIE (204 aa).

Residues 1-114 form a phosphoribosyl-AMP cyclohydrolase region; it reads MLTEQQINQL…FAPAASDWSF (114 aa). Residues 115 to 204 form a phosphoribosyl-ATP pyrophosphohydrolase region; sequence LYQLEQLLAS…IGRLRERHEK (90 aa).

The protein in the N-terminal section; belongs to the PRA-CH family. It in the C-terminal section; belongs to the PRA-PH family.

The protein resides in the cytoplasm. The catalysed reaction is 1-(5-phospho-beta-D-ribosyl)-ATP + H2O = 1-(5-phospho-beta-D-ribosyl)-5'-AMP + diphosphate + H(+). The enzyme catalyses 1-(5-phospho-beta-D-ribosyl)-5'-AMP + H2O = 1-(5-phospho-beta-D-ribosyl)-5-[(5-phospho-beta-D-ribosylamino)methylideneamino]imidazole-4-carboxamide. It functions in the pathway amino-acid biosynthesis; L-histidine biosynthesis; L-histidine from 5-phospho-alpha-D-ribose 1-diphosphate: step 2/9. Its pathway is amino-acid biosynthesis; L-histidine biosynthesis; L-histidine from 5-phospho-alpha-D-ribose 1-diphosphate: step 3/9. This chain is Histidine biosynthesis bifunctional protein HisIE (hisI), found in Yersinia pestis.